A 601-amino-acid chain; its full sequence is Oligoendopeptidase F, plasmid (601 aa).

H387 contacts Zn(2+). E388 is an active-site residue. Positions 391 and 394 each coordinate Zn(2+).

Belongs to the peptidase M3B family. The cofactor is Zn(2+).

Hydrolyzes peptides containing between 7 and 17 amino acids with a rather wide specificity. This is Oligoendopeptidase F, plasmid (pepF1) from Lactococcus lactis subsp. cremoris (Streptococcus cremoris).